We begin with the raw amino-acid sequence, 122 residues long: Small ribosomal subunit protein uS13 (122 aa).

A disordered region spans residues 97 to 122 (PVRGQRTRTNARTRKGPRKTVAKKKK). Residues 101–122 (QRTRTNARTRKGPRKTVAKKKK) show a composition bias toward basic residues.

The protein belongs to the universal ribosomal protein uS13 family. As to quaternary structure, part of the 30S ribosomal subunit. Forms a loose heterodimer with protein S19. Forms two bridges to the 50S subunit in the 70S ribosome.

In terms of biological role, located at the top of the head of the 30S subunit, it contacts several helices of the 16S rRNA. In the 70S ribosome it contacts the 23S rRNA (bridge B1a) and protein L5 of the 50S subunit (bridge B1b), connecting the 2 subunits; these bridges are implicated in subunit movement. Contacts the tRNAs in the A and P-sites. This chain is Small ribosomal subunit protein uS13, found in Caldanaerobacter subterraneus subsp. tengcongensis (strain DSM 15242 / JCM 11007 / NBRC 100824 / MB4) (Thermoanaerobacter tengcongensis).